Reading from the N-terminus, the 339-residue chain is Serine/threonine-protein kinase SRK2J (339 aa).

The Protein kinase domain occupies 4–260 (YEMVKDLGFG…LKEIKSHAWF (257 aa)). ATP-binding positions include 10–18 (LGFGNFGLA) and Lys33. Residue Asp123 is the Proton acceptor of the active site. The interval 308 to 339 (SRPVESLGSDKKDDDEEEYLDANDEEWYDDYA) is disordered. Over residues 320 to 339 (DDDEEEYLDANDEEWYDDYA) the composition is skewed to acidic residues.

It belongs to the protein kinase superfamily. Ser/Thr protein kinase family. As to expression, expressed in seedlings.

The enzyme catalyses L-seryl-[protein] + ATP = O-phospho-L-seryl-[protein] + ADP + H(+). The catalysed reaction is L-threonyl-[protein] + ATP = O-phospho-L-threonyl-[protein] + ADP + H(+). This chain is Serine/threonine-protein kinase SRK2J (SRK2J), found in Arabidopsis thaliana (Mouse-ear cress).